A 57-amino-acid polypeptide reads, in one-letter code: MLSWAVTFLVVALIAAVLGFGGIAGTAIEIAKIIFFVAIVLFVISAVAGLMRRGRAS.

Transmembrane regions (helical) follow at residues 4–24 and 30–50; these read WAVT…GGIA and IAKI…VAGL.

Belongs to the UPF0391 family.

The protein resides in the cell membrane. This is UPF0391 membrane protein Xaut_1725 from Xanthobacter autotrophicus (strain ATCC BAA-1158 / Py2).